The chain runs to 241 residues: Large ribosomal subunit protein uL30 (241 aa).

Positions 1–25 are disordered; that stretch reads MASTLKPETLVKKSKAQQKTAEERA.

This sequence belongs to the universal ribosomal protein uL30 family.

This Debaryomyces hansenii (strain ATCC 36239 / CBS 767 / BCRC 21394 / JCM 1990 / NBRC 0083 / IGC 2968) (Yeast) protein is Large ribosomal subunit protein uL30 (RPL7).